The primary structure comprises 301 residues: GTPase IMAP family member 3 (301 aa).

The Cytoplasmic portion of the chain corresponds to 1-279 (METLQNVVTG…GKKLEVLHSD (279 aa)). The 204-residue stretch at 20–223 (SRPLRILLVG…HSNDLFLHAE (204 aa)) folds into the AIG1-type G domain. Residues 29–37 (GKSGCGKSA), serine 50, 147–149 (RKE), and asparagine 184 each bind GTP. The segment at 263 to 301 (VLKVLPIGKKLEVLHSDFCWYLVLAILIFFVFFFLLFYV) is required for targeting to the endoplasmic reticulum. The helical; Anchor for type IV membrane protein transmembrane segment at 280-300 (FCWYLVLAILIFFVFFFLLFY) threads the bilayer. Position 301 (valine 301) is a topological domain, lumenal.

It belongs to the TRAFAC class TrmE-Era-EngA-EngB-Septin-like GTPase superfamily. AIG1/Toc34/Toc159-like paraseptin GTPase family. IAN subfamily. As to quaternary structure, interacts with BAD, BAK1, BAX, BCL2, BCL2L1/Bcl-xL and BCL2L11/BimEL. The interaction with BAX is increased, when cells initiate apoptosis upon IL2 withdrawal. Expressed in thymus (in thymocytes), spleen (in splenocytes), lymph node and, at lower levels, in lung. Highly expressed in T lymphocytes.

It localises to the endoplasmic reticulum membrane. In terms of biological role, during thymocyte development, may support the positive selection of CD4 and CD8 T cells. May play a role in mitochondrial DNA segregation in hematopoietic tissues. Binds GTP. The protein is GTPase IMAP family member 3 (Gimap3) of Mus musculus (Mouse).